A 525-amino-acid polypeptide reads, in one-letter code: tRNA-2-methylthio-N(6)-dimethylallyladenosine synthase (525 aa).

The 117-residue stretch at 14-130 folds into the MTTase N-terminal domain; it reads RTYQVRTYGC…LPTLLERARH (117 aa). The [4Fe-4S] cluster site is built by Cys-23, Cys-59, Cys-93, Cys-167, Cys-171, and Cys-174. In terms of domain architecture, Radical SAM core spans 153 to 400; that stretch reads RESAYAGWVS…IELQERISLE (248 aa). Residues 403–482 form the TRAM domain; sequence QAQVGRTLEL…PHHLIADGAL (80 aa).

This sequence belongs to the methylthiotransferase family. MiaB subfamily. Monomer. [4Fe-4S] cluster is required as a cofactor.

The protein localises to the cytoplasm. The catalysed reaction is N(6)-dimethylallyladenosine(37) in tRNA + (sulfur carrier)-SH + AH2 + 2 S-adenosyl-L-methionine = 2-methylsulfanyl-N(6)-dimethylallyladenosine(37) in tRNA + (sulfur carrier)-H + 5'-deoxyadenosine + L-methionine + A + S-adenosyl-L-homocysteine + 2 H(+). In terms of biological role, catalyzes the methylthiolation of N6-(dimethylallyl)adenosine (i(6)A), leading to the formation of 2-methylthio-N6-(dimethylallyl)adenosine (ms(2)i(6)A) at position 37 in tRNAs that read codons beginning with uridine. The chain is tRNA-2-methylthio-N(6)-dimethylallyladenosine synthase from Mycobacterium sp. (strain MCS).